We begin with the raw amino-acid sequence, 345 residues long: Isocitrate lyase (345 aa).

Residue 58–60 (SGY) coordinates substrate. A Mg(2+)-binding site is contributed by Asp98. Cys135 functions as the Proton acceptor in the catalytic mechanism. Substrate-binding positions include 136-137 (GH), Arg170, 230-234 (NYSSS), and Thr260. The disordered stretch occupies residues 318–345 (DPEARRRIEESEGFSEEQADPITSNDDD). The segment covering 328 to 345 (SEGFSEEQADPITSNDDD) has biased composition (acidic residues).

In terms of assembly, homotetramer or homotrimer. It depends on Mg(2+) as a cofactor.

The enzyme catalyses D-threo-isocitrate = glyoxylate + succinate. The protein operates within carbohydrate metabolism; glyoxylate cycle; (S)-malate from isocitrate: step 1/2. Functionally, involved in the metabolic adaptation in response to environmental changes. Catalyzes the reversible formation of succinate and glyoxylate from isocitrate, a key step of the glyoxylate cycle, which operates as an anaplerotic route for replenishing the tricarboxylic acid cycle during growth on fatty acid substrates. This chain is Isocitrate lyase (aceA), found in Haloferax volcanii (strain ATCC 29605 / DSM 3757 / JCM 8879 / NBRC 14742 / NCIMB 2012 / VKM B-1768 / DS2) (Halobacterium volcanii).